The sequence spans 1653 residues: Protein TOPAZ1 (1653 aa).

Disordered stretches follow at residues 1–94 (MRPP…TDLV), 284–303 (YSVEENNTGRKHRKKMKSGK), and 415–442 (ISSTVKSPSDGHHMEKRSPRGDLRSETE). Residues 63 to 78 (GREETEGDKLAKENGK) show a composition bias toward basic and acidic residues. The segment covering 423–442 (SDGHHMEKRSPRGDLRSETE) has biased composition (basic and acidic residues).

As to expression, restricted to testis, where it localizes to germ cells.

The protein resides in the cytoplasm. The protein localises to the cytosol. Important for normal spermatogenesis and male fertility. Specifically required for progression to the post-meiotic stages of spermatocyte development. Seems to be necessary for normal expression levels of a number of testis-expressed gene transcripts, although its role in this process is unclear. The sequence is that of Protein TOPAZ1 from Mus musculus (Mouse).